We begin with the raw amino-acid sequence, 519 residues long: Circadian clock oscillator protein KaiC (519 aa).

The KaiC 1 domain occupies 1–247 (MTSAEMTSPN…TITDHGINIF (247 aa)). Residues glycine 49, threonine 50, glycine 51, lysine 52, threonine 53, and leucine 54 each coordinate ATP. Threonine 53 contacts Mg(2+). The active-site Proton acceptor in CI (KaiC 1) is glutamate 77. ATP is bound at residue serine 89. The tract at residues 115-122 (QEVVGGFD) is B-loop, required to bind KaiB and SasA. ATP-binding residues include lysine 224, leucine 225, arginine 226, threonine 228, histidine 230, threonine 240, and aspartate 241. The segment at 248–260 (PLGAMRLTQRSSN) is linker. The KaiC 2 domain occupies 261–519 (VRVSSGVVRL…RGVQEKGPES (259 aa)). Positions 290, 291, 292, 293, 294, 295, and 296 each coordinate ATP. Threonine 295 lines the Mg(2+) pocket. Glutamate 318 is a binding site for Mg(2+). Glutamate 318 serves as the catalytic Proton acceptor in CII (KaiC 2). Tryptophan 331 is an ATP binding site. Serine 431 carries the phosphoserine; by autocatalysis modification. Position 432 is a phosphothreonine; by autocatalysis (threonine 432). ATP is bound by residues arginine 451, lysine 457, methionine 458, arginine 459, serine 461, histidine 463, and lysine 465. The interval 488-497 (RIISGSPTRI) is A-loop, interacts with KaiA.

It belongs to the KaiC family. Homohexamer resembling 2 stacked donuts with a central pore nearly blocked on one side; hexamerization is dependent on ATP-binding. Binds 12 ATP; 6 between each subunit in both layers. KaiB only binds to phospho-Ser-431 KaiC (not doubly phosphorylated KaiC). Complex formation between KaiB and KaiC is regulated by the phosphorylation state of KaiC and by an ATP hydrolysis-driven conformation change in the CI ring of KaiC; complex formation is slow. Slow complex formation is crucial for the timing of the circadian period. KaiB switches to a thioredoxin-like form called KaiB(fs) when bound to KaiC. The KaiABC complex composition changes during the circadian cycle to control KaiC phosphorylation. Complexes KaiC(6), KaiA(2-4):KaiC(6), KaiB(6):KaiC(6) and KaiC(6):KaiB(6):KaiA(12) are among the most important forms, many form cooperatively. Interacts directly with KaiB and SasA. The CI domain binds to KaiB and SasA; as they have a similar fold they compete for the same site on CI. CikA interacts with this protein in the clock complex. Binds to the C-terminus of KaiA via a coiled-coil structure. Forms KaiC(6):KaiB(1) and KaiC(6):KaiB(6) complexes. Mg(2+) serves as cofactor. Post-translationally, has a 4 step phosphorylation cycle; the autokinase acts first on Thr-432, then Ser-431. When Ser-431 is modified KaiC switches to an autophosphatase mode, acting first on phospho-Thr-432 then phospho-Ser-431. Phosphorylated and dephosphorylated on serine/threonine residues by autocatalysis. Unphosphorylated, mono- and di-phosphorylated forms exist. The phosphorylated form correlates with clock speed. The presence of KaiA increases phosphorylation and stabilizes these forms. In terms of processing, phosphorylated on serine and threonine residues by autocatalysis. Has a 4 step phosphorylation cycle; the autokinase acts first on Thr-432, then Ser-431. When Ser-431 is modified KaiC switches to an autophosphatase mode, acting first on phospho-Thr-432 then phospho-Ser-431.

The enzyme catalyses L-seryl-[protein] + ATP = O-phospho-L-seryl-[protein] + ADP + H(+). It carries out the reaction L-threonyl-[protein] + ATP = O-phospho-L-threonyl-[protein] + ADP + H(+). It catalyses the reaction ATP + H2O = ADP + phosphate + H(+). Interaction with KaiA stimulates autophosphorylation, KaiC interaction with KaiB sequesters KaiA, preventing it stimulating the KaiC kinase, leading to autodephosphorylation. A KaiA dimer is sufficient to enhance KaiC phosphorylation. Interaction of KaiA with the A-loop stimulates autokinase activity. Functionally, the KaiABC oscillator complex constitutes the main circadian regulator in cyanobacteria. Complex composition changes during the circadian cycle to control KaiC phosphorylation; KaiA stimulates KaiC autophosphorylation, while KaiB sequesters KaiA, leading to KaiC autodephosphorylation. The Kai complex controls chromosome condensation, leading to a transcription accessible chromosome during the first half of the circadian cycle and a compact, less transcription-accessible chromosome during the latter half. Clock output pathways impact the RpaA transcriptional regulator. Circadian oscillations can be generated in vitro by incubating KaiA, KaiB and KaiC with 1 mM ATP. The cycle is self-sustainable for at least 3 cycles and resistant to temperature changes. Mutations in KaiC alone prolong or reduce the circadian rhythm. A very robust clock is reconstituted with KaiA, KaiB, KaiC, SasA, CikA and RpaA; output is measured by transcription from an appropriate reporter. The level of KaiC phosphorylation and KaiC ATPase activity represent the key features of the biochemical oscillator. KaiA homodimer binding to the KaiC CII domain stimulates KaiC's ATPase activity and forms KaiA(2-4):KaiC(6) complexes, which stimulate KaiC autophosphorylation first on Thr-432 then Ser-431. Phospho-Ser-431-KaiC accumulation triggers binding of KaiB to CI to form the KaiB(6):KaiC(6) complex, leading to changes in the output regulators CikA and SasA. KaiB(6):KaiC(6) formation exposes a site for KaiA binding that sequesters KaiA from the CII domain, making the KaiC(6):KaiB(6):KaiA(12) complex that results in KaiC autodephosphorylation. Complete dephosphorylation of KaiC leads to dissociation of KaiA(2):KaiB(1), completing 1 cycle of the Kai oscillator. In terms of biological role, has a weak, temperature-independent ATPase activity (about 15 molecules of ATP per day); the addition of KaiA and KaiB increases activity slightly and makes the activity oscillate with a circadian period in vitro for over 60 hours. ATPase activity defines the circadian period. The phosphorylation state of KaiC modulates its ATPase activity and effects KaiB binding. Its function is as follows. There are several clock output pathways; SasA/RpaA, CikA/RpaA and LabA. KaiC enhances the autophosphorylation activity of SasA, which then transfers its phosphate group to RpaA to activate it. Phosphotransfer is maximal when KaiC phosphorylation is active during the circadian cycle. KaiB and KaiC together enhance the phosphatase activity of CikA on phospho-RpaA. Functionally, kaiC is important for metabolic partitioning during the dark to light shift, modulating the balance between the Calvin cycle and oxidative pentose phosphate pathway under natural growth conditions. This Synechococcus elongatus (strain ATCC 33912 / PCC 7942 / FACHB-805) (Anacystis nidulans R2) protein is Circadian clock oscillator protein KaiC.